A 726-amino-acid chain; its full sequence is Methionine--tRNA ligase (726 aa).

A 'HIGH' region motif is present at residues 12–22 (PYVNNIPHLGN). 4 residues coordinate Zn(2+): Cys-143, Cys-146, Cys-155, and Cys-158. Residues 330–334 (KFSKS) carry the 'KMSKS' region motif. ATP is bound at residue Lys-333. The region spanning 562-667 (FSEKVCLKVV…DNPIPGERII (106 aa)) is the tRNA-binding domain.

Belongs to the class-I aminoacyl-tRNA synthetase family. MetG type 1 subfamily. As to quaternary structure, homodimer. The cofactor is Zn(2+).

Its subcellular location is the cytoplasm. The enzyme catalyses tRNA(Met) + L-methionine + ATP = L-methionyl-tRNA(Met) + AMP + diphosphate. Its function is as follows. Is required not only for elongation of protein synthesis but also for the initiation of all mRNA translation through initiator tRNA(fMet) aminoacylation. The protein is Methionine--tRNA ligase of Borrelia turicatae (strain 91E135).